The sequence spans 326 residues: MEVADRMMSNGVDNDRRSSPSPHRGNGDMNNGNGNGNRDSRERSPPRGNSRERSPPRGGSPNRGGSPNRGGSPNRGGSPNRGGSPSRDDKRRYGNGGNGETRNRLANTASPSNVLGVFGLAPQTEERDLKDEFSRFGKIDHVDLIMDRKTGRSKCFGFVYFENKEDAVRAKEECQDLQLHGKSIRTDFSATKKPHEPTPGKYFGNPRYDSRRSPPRFSPYGGGDRYGRGDYGGRGGGGDRYGRDDRGGDRYGRDDRGGDRYGGRDDRGGDRYGGRDERGGDRGGDRYGRDDRDRHREDSRDRYNDRGGDRYNDRFRDERPRDSYRR.

Disordered stretches follow at residues 1–114 (MEVA…PSNV) and 179–326 (LHGK…SYRR). Residues 38–55 (RDSRERSPPRGNSRERSP) are compositionally biased toward basic and acidic residues. A compositionally biased stretch (low complexity) spans 56-85 (PRGGSPNRGGSPNRGGSPNRGGSPNRGGSP). Polar residues predominate over residues 104 to 113 (RLANTASPSN). The RRM domain maps to 113–191 (NVLGVFGLAP…KSIRTDFSAT (79 aa)). Gly residues predominate over residues 220 to 239 (YGGGDRYGRGDYGGRGGGGD). Over residues 240–326 (RYGRDDRGGD…DERPRDSYRR (87 aa)) the composition is skewed to basic and acidic residues.

This sequence belongs to the splicing factor SR family.

Its subcellular location is the nucleus. Functionally, sequence-specific RNA-binding protein which participates in the control of pre-mRNA splicing. The chain is Transformer-2 protein homolog (tra2) from Dictyostelium discoideum (Social amoeba).